A 443-amino-acid chain; its full sequence is D(2) dopamine receptor (443 aa).

At 1-37 (MDPLNLSWYDDDLERQNWSRPFNGSDGKADRPHYNYY) the chain is on the extracellular side. N-linked (GlcNAc...) asparagine glycans are attached at residues asparagine 5, asparagine 17, and asparagine 23. The helical transmembrane segment at 38 to 60 (ATLLTLLIAVIVFGNVLVCMAVS) threads the bilayer. Topologically, residues 61-70 (REKALQTTTN) are cytoplasmic. The helical transmembrane segment at 71 to 93 (YLIVSLAVADLLVATLVMPWVVY) threads the bilayer. Topologically, residues 94-108 (LEVVGEWKFSKIHCD) are extracellular. The cysteines at positions 107 and 182 are disulfide-linked. Residues 109–130 (IFVTLDVMMCTASILNLCAISI) traverse the membrane as a helical segment. Residues 131–151 (DRYTAVAMPMLYNTRYSSKRR) lie on the Cytoplasmic side of the membrane. The chain crosses the membrane as a helical span at residues 152–172 (VTVMIAIVWVLSFTISCPLLF). The Extracellular segment spans residues 173–188 (GLNNADQNECIIANPA). The chain crosses the membrane as a helical span at residues 189-213 (FVVYSSIVSFYVPFIVTLLVYIKIY). Residues 211-373 (KIYIVLRRRR…SQQKEKKATQ (163 aa)) are interaction with PPP1R9B. At 214 to 373 (IVLRRRRKRV…SQQKEKKATQ (160 aa)) the chain is on the cytoplasmic side. The segment at 281 to 332 (MEMLSSTSPPERTRYSPIPPSHHQLTLPDPSHHGLHSTPDSPAKPEKNGHAK) is disordered. Residues 374-395 (MLAIVLGVFIICWLPFFITHIL) traverse the membrane as a helical segment. The Extracellular portion of the chain corresponds to 396 to 409 (NIHCDCNIPPVLYS). An intrachain disulfide couples cysteine 399 to cysteine 401. A helical membrane pass occupies residues 410 to 431 (AFTWLGYVNSAVNPIIYTTFNI). Residues 432 to 443 (EFRKAFLKILHC) lie on the Cytoplasmic side of the membrane. Residue cysteine 443 is the site of S-palmitoyl cysteine attachment.

Belongs to the G-protein coupled receptor 1 family. As to quaternary structure, forms homo- and heterooligomers with DRD4. The interaction with DRD4 may modulate agonist-induced downstream signaling. Interacts with CADPS and CADPS2. Interacts with GPRASP1, PPP1R9B and CLIC6. Interacts with ARRB2. Interacts with HTR2A. Interacts with DRD1. Interacts with KCNA2. Palmitoylated. Palmitoylation which is required for proper localization to the plasma membrane and stability of the receptor could be carried on by ZDHHC4, ZDHHC3 and ZDHHC8.

It is found in the cell membrane. It localises to the golgi apparatus membrane. In terms of biological role, dopamine receptor whose activity is mediated by G proteins which inhibit adenylyl cyclase. Positively regulates postnatal regression of retinal hyaloid vessels via suppression of VEGFR2/KDR activity, downstream of OPN5. This chain is D(2) dopamine receptor (DRD2), found in Chlorocebus aethiops (Green monkey).